A 433-amino-acid polypeptide reads, in one-letter code: Peptidoglycan glycosyltransferase RodA (433 aa).

The next 12 helical transmembrane spans lie at 9 to 29 (FDYL…LFIY), 44 to 64 (YLKQ…VSMY), 74 to 94 (TLIF…GRYV), 100 to 120 (WIGV…AYIL), 158 to 178 (LGTA…AGFP), 181 to 201 (LIFA…LPLW), 221 to 241 (LSLF…VGYL), 249 to 269 (YWIT…LLGV), 295 to 315 (WHII…MGYL), 341 to 361 (WGFV…LHTL), 378 to 398 (GVLG…MGIM), and 400 to 420 (ITGI…TAMI).

This sequence belongs to the SEDS family. MrdB/RodA subfamily.

The protein resides in the cell inner membrane. It carries out the reaction [GlcNAc-(1-&gt;4)-Mur2Ac(oyl-L-Ala-gamma-D-Glu-L-Lys-D-Ala-D-Ala)](n)-di-trans,octa-cis-undecaprenyl diphosphate + beta-D-GlcNAc-(1-&gt;4)-Mur2Ac(oyl-L-Ala-gamma-D-Glu-L-Lys-D-Ala-D-Ala)-di-trans,octa-cis-undecaprenyl diphosphate = [GlcNAc-(1-&gt;4)-Mur2Ac(oyl-L-Ala-gamma-D-Glu-L-Lys-D-Ala-D-Ala)](n+1)-di-trans,octa-cis-undecaprenyl diphosphate + di-trans,octa-cis-undecaprenyl diphosphate + H(+). Its pathway is cell wall biogenesis; peptidoglycan biosynthesis. Peptidoglycan polymerase that is essential for cell wall elongation. This chain is Peptidoglycan glycosyltransferase RodA, found in Treponema pallidum (strain Nichols).